A 471-amino-acid chain; its full sequence is ATP synthase subunit beta (471 aa).

159-166 serves as a coordination point for ATP; that stretch reads GGAGVGKT.

It belongs to the ATPase alpha/beta chains family. As to quaternary structure, F-type ATPases have 2 components, CF(1) - the catalytic core - and CF(0) - the membrane proton channel. CF(1) has five subunits: alpha(3), beta(3), gamma(1), delta(1), epsilon(1). CF(0) has four main subunits: a(1), b(1), b'(1) and c(9-12).

It localises to the cell membrane. It catalyses the reaction ATP + H2O + 4 H(+)(in) = ADP + phosphate + 5 H(+)(out). Produces ATP from ADP in the presence of a proton gradient across the membrane. The catalytic sites are hosted primarily by the beta subunits. This chain is ATP synthase subunit beta, found in Heliobacterium modesticaldum (strain ATCC 51547 / Ice1).